Reading from the N-terminus, the 859-residue chain is Photoactivated adenylate cyclase subunit beta-like protein ST- (859 aa).

Residues 56–149 form the BLUF 1 domain; the sequence is LRRLMYLSKS…GRMYGDWHMK (94 aa). The tract at residues 420 to 444 is disordered; that stretch reads RPPIFDDTPKSNPRPRTPGYGGRQR. Residues 471–563 form the BLUF 2 domain; that stretch reads LTTLTYISQA…RVYTSEWTLT (93 aa). The segment at 814-859 is disordered; sequence ARSGEQPLTEPEQAKPDFRVSPGRDRHGVSGRRSNSSQGKGSIQVG. A compositionally biased stretch (basic and acidic residues) spans 825 to 841; it reads EQAKPDFRVSPGRDRHG. A compositionally biased stretch (polar residues) spans 845 to 859; the sequence is RRSNSSQGKGSIQVG.

In terms of assembly, heterotetramer of two alpha and two beta subunits.

The protein localises to the cell projection. It is found in the cilium. The protein resides in the flagellum. The sequence is that of Photoactivated adenylate cyclase subunit beta-like protein ST- from Euglena gracilis.